The following is a 261-amino-acid chain: Probable trans-aconitate 2-methyltransferase (261 aa).

It belongs to the methyltransferase superfamily. Tam family.

Its subcellular location is the cytoplasm. The catalysed reaction is trans-aconitate + S-adenosyl-L-methionine = (E)-3-(methoxycarbonyl)pent-2-enedioate + S-adenosyl-L-homocysteine. Catalyzes the S-adenosylmethionine monomethyl esterification of trans-aconitate. This Mycobacterium bovis (strain ATCC BAA-935 / AF2122/97) protein is Probable trans-aconitate 2-methyltransferase.